A 132-amino-acid polypeptide reads, in one-letter code: Translation initiation factor 5A (132 aa).

Lys36 is subject to Hypusine.

The protein belongs to the eIF-5A family.

The protein localises to the cytoplasm. In terms of biological role, functions by promoting the formation of the first peptide bond. The polypeptide is Translation initiation factor 5A (eIF5A) (Pyrobaculum neutrophilum (strain DSM 2338 / JCM 9278 / NBRC 100436 / V24Sta) (Thermoproteus neutrophilus)).